The chain runs to 688 residues: Putative proline--tRNA ligase YHR020W (688 aa).

Position 149 is a phosphoserine (Ser-149). The residue at position 170 (Thr-170) is a Phosphothreonine. Residues 631 to 650 (ESSAKKDDGEEFEEDDKAPS) are disordered. The residue at position 655 (Ser-655) is a Phosphoserine.

It belongs to the class-II aminoacyl-tRNA synthetase family.

It catalyses the reaction tRNA(Pro) + L-proline + ATP = L-prolyl-tRNA(Pro) + AMP + diphosphate. This is Putative proline--tRNA ligase YHR020W from Saccharomyces cerevisiae (strain ATCC 204508 / S288c) (Baker's yeast).